The chain runs to 372 residues: Serine protease 44 (372 aa).

The N-terminal stretch at 1–25 (MAFQGCDCFGLLVWLLLLQTRLGKA) is a signal peptide. The Extracellular segment spans residues 26-351 (RMVPGTPSLS…KELSRASCWK (326 aa)). The tract at residues 31 to 72 (TPSLSPLPSENGLDDSGVNPQERPLTGMPETSLPRKPGDSTR) is disordered. In terms of domain architecture, Peptidase S1 spans 112–345 (IVGGRPAPAR…YRDWIIKELS (234 aa)). Cysteines 137 and 153 form a disulfide. Active-site charge relay system residues include His152 and Asp197. Asn208 carries N-linked (GlcNAc...) asparagine glycosylation. Intrachain disulfides connect Cys231–Cys303, Cys262–Cys283, and Cys293–Cys321. Catalysis depends on Ser297, which acts as the Charge relay system. A helical transmembrane segment spans residues 352–372 (LSGFLVLSVCLVLHLAIVVAL).

Belongs to the peptidase S1 family. Testis-specific. Expressed by primary and secondary spermatocytes.

Its subcellular location is the membrane. It localises to the cytoplasm. Lacks protease activity in vitro. The protein is Serine protease 44 of Mus musculus (Mouse).